A 503-amino-acid chain; its full sequence is GTPase Obg (503 aa).

Positions 2–159 (PQFVDRVVLH…KDVILELKSM (158 aa)) constitute an Obg domain. Positions 160–340 (ADVGLVGFPS…LKYALMDIVK (181 aa)) constitute an OBG-type G domain. Residues 166 to 173 (GFPSAGKS), 191 to 195 (FTTLV), 212 to 215 (DVPG), 292 to 295 (NKMD), and 321 to 323 (STV) each bind GTP. Positions 173 and 193 each coordinate Mg(2+). The OCT domain occupies 371–444 (EFEVEADPSA…IGEITFEWDP (74 aa)). The span at 457-476 (RGTDVRLEQNTRATPEERKR) shows a compositional bias: basic and acidic residues. Residues 457–503 (RGTDVRLEQNTRATPEERKRASQARRGLIDENDFGDGEVAERERWQG) are disordered.

It belongs to the TRAFAC class OBG-HflX-like GTPase superfamily. OBG GTPase family. Monomer. It depends on Mg(2+) as a cofactor.

Its subcellular location is the cytoplasm. In terms of biological role, an essential GTPase which binds GTP, GDP and possibly (p)ppGpp with moderate affinity, with high nucleotide exchange rates and a fairly low GTP hydrolysis rate. Plays a role in control of the cell cycle, stress response, ribosome biogenesis and in those bacteria that undergo differentiation, in morphogenesis control. This chain is GTPase Obg, found in Corynebacterium jeikeium (strain K411).